The primary structure comprises 366 residues: Alanine racemase (366 aa).

The Proton acceptor; specific for D-alanine role is filled by lysine 40. Lysine 40 carries the N6-(pyridoxal phosphate)lysine modification. Arginine 136 serves as a coordination point for substrate. The Proton acceptor; specific for L-alanine role is filled by tyrosine 263. Methionine 310 is a binding site for substrate.

This sequence belongs to the alanine racemase family. Requires pyridoxal 5'-phosphate as cofactor.

The enzyme catalyses L-alanine = D-alanine. Its pathway is amino-acid biosynthesis; D-alanine biosynthesis; D-alanine from L-alanine: step 1/1. Functionally, catalyzes the interconversion of L-alanine and D-alanine. May also act on other amino acids. The polypeptide is Alanine racemase (alr) (Streptococcus pyogenes serotype M12 (strain MGAS2096)).